A 799-amino-acid polypeptide reads, in one-letter code: Lon protease (799 aa).

The 194-residue stretch at 7-200 (LPVLPLRDIV…KVFALMEGEI (194 aa)) folds into the Lon N-terminal domain. 352–359 (GPPGVGKT) lines the ATP pocket. A Lon proteolytic domain is found at 587 to 768 (VDQVGIVTGL…DEVLKHALTG (182 aa)). Residues serine 674 and lysine 717 contribute to the active site. The interval 772–799 (PVEWNEAEEPITTSAKKDDGDSDAMLTH) is disordered.

Belongs to the peptidase S16 family. As to quaternary structure, homohexamer. Organized in a ring with a central cavity.

The protein resides in the cytoplasm. The catalysed reaction is Hydrolysis of proteins in presence of ATP.. Its function is as follows. ATP-dependent serine protease that mediates the selective degradation of mutant and abnormal proteins as well as certain short-lived regulatory proteins. Required for cellular homeostasis and for survival from DNA damage and developmental changes induced by stress. Degrades polypeptides processively to yield small peptide fragments that are 5 to 10 amino acids long. Binds to DNA in a double-stranded, site-specific manner. CcrM is an important target of the Lon protease pathway in C.crescentus. This is Lon protease from Caulobacter vibrioides (strain ATCC 19089 / CIP 103742 / CB 15) (Caulobacter crescentus).